A 103-amino-acid chain; its full sequence is Flagellar hook-basal body complex protein FliE (103 aa).

The protein belongs to the FliE family.

It is found in the bacterial flagellum basal body. The protein is Flagellar hook-basal body complex protein FliE of Yersinia enterocolitica serotype O:8 / biotype 1B (strain NCTC 13174 / 8081).